Reading from the N-terminus, the 87-residue chain is Small ribosomal subunit protein uS17 (87 aa).

The protein belongs to the universal ribosomal protein uS17 family. As to quaternary structure, part of the 30S ribosomal subunit.

Its function is as follows. One of the primary rRNA binding proteins, it binds specifically to the 5'-end of 16S ribosomal RNA. The polypeptide is Small ribosomal subunit protein uS17 (Listeria innocua serovar 6a (strain ATCC BAA-680 / CLIP 11262)).